The following is a 600-amino-acid chain: Spastin (600 aa).

The segment at 1–39 (MNSPGGRNDKKKPVTPAAETGPGSPTTPPSTETQVVLAP) is disordered. Residues 1–53 (MNSPGGRNDKKKPVTPAAETGPGSPTTPPSTETQVVLAPPSPHKRNLHLFSYP) are Cytoplasmic-facing. The segment covering 15 to 33 (TPAAETGPGSPTTPPSTET) has biased composition (low complexity). The helical intramembrane region spans 54–74 (LLAVFSLLRFLAFQLGLLFVW). At 75 to 600 (CCELLSRSVM…WNQDFGDTTV (526 aa)) the chain is on the cytoplasmic side. An MIT domain is found at 110 to 185 (YHQQAFQYIS…IMAKDRLQLL (76 aa)). Positions 213 to 294 (GLLKPEKGAV…KPATPTTAVR (82 aa)) are disordered. The segment covering 216 to 228 (KPEKGAVPKKKDP) has biased composition (basic and acidic residues). The segment covering 253–291 (PNCTSVPTSARQAGAHTPSNRGATGKNNTRTNKPATPTT) has biased composition (polar residues). Residue 366–373 (GPPGNGKT) participates in ATP binding.

It belongs to the AAA ATPase family. Spastin subfamily. Homohexamer. The homohexamer is stabilized by ATP-binding. The homohexamer may adopt a ring conformation through which microtubules pass prior to being severed. Interacts with microtubules.

The protein localises to the membrane. The protein resides in the cytoplasm. Its subcellular location is the cytoskeleton. It is found in the microtubule organizing center. It localises to the centrosome. The protein localises to the perinuclear region. The protein resides in the nucleus. The catalysed reaction is n ATP + n H2O + a microtubule = n ADP + n phosphate + (n+1) alpha/beta tubulin heterodimers.. Its function is as follows. ATP-dependent microtubule severing protein that specifically recognizes and cuts microtubules that are polyglutamylated. Preferentially recognizes and acts on microtubules decorated with short polyglutamate tails: severing activity increases as the number of glutamates per tubulin rises from one to eight, but decreases beyond this glutamylation threshold. Microtubule severing promotes reorganization of cellular microtubule arrays and the release of microtubules from the centrosome following nucleation. Required for membrane traffic from the endoplasmic reticulum (ER) to the Golgi and for completion of the abscission stage of cytokinesis. Also plays a role in axon growth and the formation of axonal branches. The sequence is that of Spastin from Xenopus laevis (African clawed frog).